We begin with the raw amino-acid sequence, 646 residues long: Stage V sporulation protein D (646 aa).

The active-site Acyl-ester intermediate is Ser-294. One can recognise a PASTA domain in the interval 580-638 (DTKTIEVPNVVGMSVSDLESLLVNLNVDASGKGSKIVKQSPAAGTKVKEGSKIRVYLTE).

The protein belongs to the transpeptidase family.

The protein resides in the cell membrane. The catalysed reaction is Preferential cleavage: (Ac)2-L-Lys-D-Ala-|-D-Ala. Also transpeptidation of peptidyl-alanyl moieties that are N-acyl substituents of D-alanine.. It participates in cell wall biogenesis; peptidoglycan biosynthesis. Penicillin-binding protein with an unknown catalytic activity. May have a specialized role in the morphogenesis of spore cortex, which is a modified form of peptidoglycan. Spore cortex formation is determined primarily by the mother cell. This Bacillus subtilis (strain 168) protein is Stage V sporulation protein D (spoVD).